Reading from the N-terminus, the 409-residue chain is Aspartic protease pepA (409 aa).

Positions 1 to 19 (MPSIVSLTAALTFVGAVIA) are cleaved as a signal peptide. A propeptide spans 20–65 (SPVEKRSAFSVEQVPHTTYLKNGPAQKVKTLRKYGKPVPQSLLDAA) (activation peptide). One can recognise a Peptidase A1 domain in the interval 97–404 (YLSPVTVGST…PDSPPRIGLA (308 aa)). Active-site residues include D113 and D293. C329 and C364 are oxidised to a cystine. N-linked (GlcNAc...) asparagine glycosylation is present at N335.

This sequence belongs to the peptidase A1 family. As to quaternary structure, monomer.

It localises to the secreted. Secreted aspartic endopeptidase that allows assimilation of proteinaceous substrates. The scissile peptide bond is attacked by a nucleophilic water molecule activated by two aspartic residues in the active site. Shows a broad primary substrate specificity. Favors hydrophobic residues at the P1 and P1' positions. This chain is Aspartic protease pepA, found in Leptosphaeria maculans (strain JN3 / isolate v23.1.3 / race Av1-4-5-6-7-8) (Blackleg fungus).